We begin with the raw amino-acid sequence, 241 residues long: Uracil-DNA glycosylase (241 aa).

Catalysis depends on Asp73, which acts as the Proton acceptor.

It belongs to the uracil-DNA glycosylase (UDG) superfamily. UNG family.

The protein localises to the cytoplasm. The enzyme catalyses Hydrolyzes single-stranded DNA or mismatched double-stranded DNA and polynucleotides, releasing free uracil.. Its function is as follows. Excises uracil residues from the DNA which can arise as a result of misincorporation of dUMP residues by DNA polymerase or due to deamination of cytosine. The chain is Uracil-DNA glycosylase from Agrobacterium fabrum (strain C58 / ATCC 33970) (Agrobacterium tumefaciens (strain C58)).